We begin with the raw amino-acid sequence, 969 residues long: Exoribonuclease II, mitochondrial (969 aa).

The transit peptide at 1 to 41 directs the protein to the mitochondrion; the sequence is MVVRRKVHVLLIARSFHSYTPCFRVTTRGKRQRSKSKQQAK. The segment covering 28–38 has biased composition (basic residues); it reads RGKRQRSKSKQ. Residues 28-54 form a disordered region; that stretch reads RGKRQRSKSKQQAKVELDHTRELDNDQ. Basic and acidic residues predominate over residues 40 to 51; that stretch reads AKVELDHTRELD. The RNB domain maps to 522-853; it reads RYDFGDLRVF…NHLQIHRHLQ (332 aa).

The protein belongs to the RNR ribonuclease family. In terms of assembly, MSU1 and SUV3 are the two components of the mitochondrial degradosome (mtEXO).

It localises to the mitochondrion matrix. The catalysed reaction is Exonucleolytic cleavage in the 3'- to 5'-direction to yield nucleoside 5'-phosphates.. Its function is as follows. Essential for mitochondrial biogenesis. Required for intron-independent turnover and processing of mitochondrial RNA. Participates in 3' mtRNA processing where it hydrolyzes single-stranded RNA or partially double-stranded RNA with 3' single-stranded tails. In Saccharomyces cerevisiae (strain ATCC 204508 / S288c) (Baker's yeast), this protein is Exoribonuclease II, mitochondrial (DSS1).